The sequence spans 218 residues: Small ribosomal subunit protein uS5 (218 aa).

The S5 DRBM domain maps to 55–118 (LDHEVIDVSI…RNAKLNIIPV (64 aa)).

Belongs to the universal ribosomal protein uS5 family. In terms of assembly, part of the 30S ribosomal subunit. Contacts protein S4.

With S4 and S12 plays an important role in translational accuracy. The sequence is that of Small ribosomal subunit protein uS5 from Aeropyrum pernix (strain ATCC 700893 / DSM 11879 / JCM 9820 / NBRC 100138 / K1).